Reading from the N-terminus, the 602-residue chain is Aspartate--tRNA(Asp/Asn) ligase (602 aa).

Residue glutamate 176 coordinates L-aspartate. The segment at 200 to 203 (QQFK) is aspartate. L-aspartate-binding residues include arginine 222 and histidine 452. An ATP-binding site is contributed by 222–224 (RDE). An ATP-binding site is contributed by glutamate 490. Arginine 497 is an L-aspartate binding site. 542-545 (GIDR) is a binding site for ATP.

This sequence belongs to the class-II aminoacyl-tRNA synthetase family. Type 1 subfamily. In terms of assembly, homodimer.

The protein resides in the cytoplasm. It catalyses the reaction tRNA(Asx) + L-aspartate + ATP = L-aspartyl-tRNA(Asx) + AMP + diphosphate. Its function is as follows. Aspartyl-tRNA synthetase with relaxed tRNA specificity since it is able to aspartylate not only its cognate tRNA(Asp) but also tRNA(Asn). Reaction proceeds in two steps: L-aspartate is first activated by ATP to form Asp-AMP and then transferred to the acceptor end of tRNA(Asp/Asn). This Rickettsia akari (strain Hartford) protein is Aspartate--tRNA(Asp/Asn) ligase.